Here is a 652-residue protein sequence, read N- to C-terminus: Probable serine/threonine-protein kinase mkcD (652 aa).

Disordered stretches follow at residues Met-1–Lys-47, Asn-163–Val-198, and Gln-257–Pro-289. Positions Asn-182–Asp-191 are enriched in gly residues. Residues Lys-231–Glu-275 are a coiled coil. A compositionally biased stretch (low complexity) spans Gln-257–Gln-271. A compositionally biased stretch (polar residues) spans Ser-279–Pro-289. The 258-residue stretch at Phe-369 to Leu-626 folds into the Protein kinase domain. ATP is bound by residues Glu-375–Val-383 and Lys-403. Asp-494 acts as the Proton acceptor in catalysis.

Belongs to the protein kinase superfamily. STE Ser/Thr protein kinase family. STE20 subfamily. Mg(2+) serves as cofactor.

The enzyme catalyses L-seryl-[protein] + ATP = O-phospho-L-seryl-[protein] + ADP + H(+). The catalysed reaction is L-threonyl-[protein] + ATP = O-phospho-L-threonyl-[protein] + ADP + H(+). The protein is Probable serine/threonine-protein kinase mkcD of Dictyostelium discoideum (Social amoeba).